We begin with the raw amino-acid sequence, 81 residues long: Three-finger toxin MALT0051C (81 aa).

The signal sequence occupies residues 1–21; sequence MKTLLLTLVVVTVVCLDFGHT. Intrachain disulfides connect Cys-24-Cys-43, Cys-38-Cys-60, Cys-62-Cys-73, and Cys-74-Cys-79.

Belongs to the three-finger toxin family. Short-chain subfamily. Type I alpha-neurotoxin sub-subfamily. Expressed by the venom gland.

Its subcellular location is the secreted. Binds to muscle nicotinic acetylcholine receptor (nAChR) and inhibit acetylcholine from binding to the receptor, thereby impairing neuromuscular transmission. The sequence is that of Three-finger toxin MALT0051C from Micrurus altirostris (Uruguayan coral snake).